The following is an 89-amino-acid chain: Small ribosomal subunit protein uS15 (89 aa).

This sequence belongs to the universal ribosomal protein uS15 family. As to quaternary structure, part of the 30S ribosomal subunit. Forms a bridge to the 50S subunit in the 70S ribosome, contacting the 23S rRNA.

One of the primary rRNA binding proteins, it binds directly to 16S rRNA where it helps nucleate assembly of the platform of the 30S subunit by binding and bridging several RNA helices of the 16S rRNA. In terms of biological role, forms an intersubunit bridge (bridge B4) with the 23S rRNA of the 50S subunit in the ribosome. The chain is Small ribosomal subunit protein uS15 from Mycobacteroides abscessus (strain ATCC 19977 / DSM 44196 / CCUG 20993 / CIP 104536 / JCM 13569 / NCTC 13031 / TMC 1543 / L948) (Mycobacterium abscessus).